A 260-amino-acid polypeptide reads, in one-letter code: NAD-capped RNA hydrolase NudC (260 aa).

R69 provides a ligand contact to substrate. Residues C98 and C101 each contribute to the Zn(2+) site. Residue E111 coordinates substrate. Zn(2+) is bound by residues C116 and C119. Substrate is bound at residue Y124. The Nudix hydrolase domain occupies 125-248; the sequence is PQIAPCIIVA…TVARRLIEDT (124 aa). The a divalent metal cation site is built by A158, E174, and E178. A Nudix box motif is present at residues 159-180; the sequence is GFVEVGETLEQTVVREVMEESQ. 192 to 199 serves as a coordination point for substrate; the sequence is QPWPFPHS. E219 is a binding site for a divalent metal cation. A241 contacts substrate.

The protein belongs to the Nudix hydrolase family. NudC subfamily. Homodimer. It depends on Mg(2+) as a cofactor. Mn(2+) serves as cofactor. The cofactor is Zn(2+).

It carries out the reaction a 5'-end NAD(+)-phospho-ribonucleoside in mRNA + H2O = a 5'-end phospho-adenosine-phospho-ribonucleoside in mRNA + beta-nicotinamide D-ribonucleotide + 2 H(+). It catalyses the reaction NAD(+) + H2O = beta-nicotinamide D-ribonucleotide + AMP + 2 H(+). The enzyme catalyses NADH + H2O = reduced beta-nicotinamide D-ribonucleotide + AMP + 2 H(+). MRNA decapping enzyme that specifically removes the nicotinamide adenine dinucleotide (NAD) cap from a subset of mRNAs by hydrolyzing the diphosphate linkage to produce nicotinamide mononucleotide (NMN) and 5' monophosphate mRNA. The NAD-cap is present at the 5'-end of some mRNAs and stabilizes RNA against 5'-processing. Has preference for mRNAs with a 5'-end purine. Catalyzes the hydrolysis of a broad range of dinucleotide pyrophosphates. The chain is NAD-capped RNA hydrolase NudC from Pectobacterium atrosepticum (strain SCRI 1043 / ATCC BAA-672) (Erwinia carotovora subsp. atroseptica).